The following is a 186-amino-acid chain: ATP-dependent protease subunit HslV (186 aa).

Residue T14 is part of the active site. Na(+) is bound by residues A168, C171, and T174.

This sequence belongs to the peptidase T1B family. HslV subfamily. As to quaternary structure, a double ring-shaped homohexamer of HslV is capped on each side by a ring-shaped HslU homohexamer. The assembly of the HslU/HslV complex is dependent on binding of ATP.

The protein localises to the cytoplasm. It catalyses the reaction ATP-dependent cleavage of peptide bonds with broad specificity.. With respect to regulation, allosterically activated by HslU binding. Protease subunit of a proteasome-like degradation complex believed to be a general protein degrading machinery. This Bradyrhizobium diazoefficiens (strain JCM 10833 / BCRC 13528 / IAM 13628 / NBRC 14792 / USDA 110) protein is ATP-dependent protease subunit HslV.